Here is a 161-residue protein sequence, read N- to C-terminus: Nucleotide-binding protein swp_1151 (161 aa).

It belongs to the YajQ family.

Nucleotide-binding protein. The protein is Nucleotide-binding protein swp_1151 of Shewanella piezotolerans (strain WP3 / JCM 13877).